The primary structure comprises 367 residues: Dye-decolorizing peroxidase (367 aa).

D152 functions as the Proton acceptor in the catalytic mechanism. Position 225 (H225) interacts with heme. The interval D311–Q367 is disordered. A compositionally biased stretch (low complexity) spans A345–S356. Residues G358–R365 are targeting peptide.

This sequence belongs to the DyP-type peroxidase family. As to quaternary structure, homohexamer. It depends on heme b as a cofactor.

It localises to the encapsulin nanocompartment. Functionally, cargo protein of a type 1 encapsulin nanocompartment. Has both general peroxidase activity and dye-decolorizing activity. Can catalyze the oxidation of both protoporphyrinogen IX and coproporphyrinogen III to their corresponding porphyrins. Also efficiently decolorizes the dyes alizarin red and Cibacron blue F3GA. This cargo-loaded encapsulin nanocompartment is probably involved in protection against oxidative damage. This chain is Dye-decolorizing peroxidase, found in Brevibacterium linens.